A 364-amino-acid polypeptide reads, in one-letter code: Chorismate synthase (364 aa).

NADP(+) is bound at residue Arg47. Residues 125 to 127 (RAS), Gly288, 303 to 307 (KPTAT), and Arg329 contribute to the FMN site.

The protein belongs to the chorismate synthase family. Homotetramer. It depends on FMNH2 as a cofactor.

The catalysed reaction is 5-O-(1-carboxyvinyl)-3-phosphoshikimate = chorismate + phosphate. Its pathway is metabolic intermediate biosynthesis; chorismate biosynthesis; chorismate from D-erythrose 4-phosphate and phosphoenolpyruvate: step 7/7. In terms of biological role, catalyzes the anti-1,4-elimination of the C-3 phosphate and the C-6 proR hydrogen from 5-enolpyruvylshikimate-3-phosphate (EPSP) to yield chorismate, which is the branch point compound that serves as the starting substrate for the three terminal pathways of aromatic amino acid biosynthesis. This reaction introduces a second double bond into the aromatic ring system. The protein is Chorismate synthase of Synechococcus sp. (strain CC9605).